Consider the following 592-residue polypeptide: V-type ATP synthase alpha chain (592 aa).

Residue 233–240 (GPFGSGKT) participates in ATP binding.

This sequence belongs to the ATPase alpha/beta chains family.

The catalysed reaction is ATP + H2O + 4 H(+)(in) = ADP + phosphate + 5 H(+)(out). Produces ATP from ADP in the presence of a proton gradient across the membrane. The V-type alpha chain is a catalytic subunit. The chain is V-type ATP synthase alpha chain from Clostridium botulinum (strain Okra / Type B1).